Here is a 130-residue protein sequence, read N- to C-terminus: Transcription antitermination protein NusB (130 aa).

Belongs to the NusB family.

Functionally, involved in transcription antitermination. Required for transcription of ribosomal RNA (rRNA) genes. Binds specifically to the boxA antiterminator sequence of the ribosomal RNA (rrn) operons. This is Transcription antitermination protein NusB from Bacillus mycoides (strain KBAB4) (Bacillus weihenstephanensis).